We begin with the raw amino-acid sequence, 351 residues long: Dihydroorotate dehydrogenase (quinone) (351 aa).

FMN contacts are provided by residues 61 to 65 (AGLDK) and Thr85. Substrate is bound at residue Lys65. 110-114 (NRMGF) serves as a coordination point for substrate. Positions 139 and 172 each coordinate FMN. Residue Asn172 coordinates substrate. Ser175 (nucleophile) is an active-site residue. Asn177 contributes to the substrate binding site. Residues Lys217 and Thr245 each coordinate FMN. A substrate-binding site is contributed by 246 to 247 (NT). FMN is bound by residues Gly268, Gly297, and 318–319 (YS).

Belongs to the dihydroorotate dehydrogenase family. Type 2 subfamily. In terms of assembly, monomer. The cofactor is FMN.

The protein resides in the cell membrane. It catalyses the reaction (S)-dihydroorotate + a quinone = orotate + a quinol. It functions in the pathway pyrimidine metabolism; UMP biosynthesis via de novo pathway; orotate from (S)-dihydroorotate (quinone route): step 1/1. In terms of biological role, catalyzes the conversion of dihydroorotate to orotate with quinone as electron acceptor. The sequence is that of Dihydroorotate dehydrogenase (quinone) from Xanthomonas campestris pv. campestris (strain 8004).